The primary structure comprises 273 residues: 4-hydroxy-tetrahydrodipicolinate reductase (273 aa).

NAD(+) is bound by residues 12 to 17 (GAGGRM) and Glu38. Arg39 contributes to the NADP(+) binding site. Residues 102–104 (GTT) and 126–129 (AANF) each bind NAD(+). His159 (proton donor/acceptor) is an active-site residue. His160 contributes to the (S)-2,3,4,5-tetrahydrodipicolinate binding site. The active-site Proton donor is the Lys163. 169–170 (GT) contributes to the (S)-2,3,4,5-tetrahydrodipicolinate binding site.

This sequence belongs to the DapB family. Homotetramer.

The protein localises to the cytoplasm. The catalysed reaction is (S)-2,3,4,5-tetrahydrodipicolinate + NAD(+) + H2O = (2S,4S)-4-hydroxy-2,3,4,5-tetrahydrodipicolinate + NADH + H(+). It catalyses the reaction (S)-2,3,4,5-tetrahydrodipicolinate + NADP(+) + H2O = (2S,4S)-4-hydroxy-2,3,4,5-tetrahydrodipicolinate + NADPH + H(+). The protein operates within amino-acid biosynthesis; L-lysine biosynthesis via DAP pathway; (S)-tetrahydrodipicolinate from L-aspartate: step 4/4. Catalyzes the conversion of 4-hydroxy-tetrahydrodipicolinate (HTPA) to tetrahydrodipicolinate. The protein is 4-hydroxy-tetrahydrodipicolinate reductase of Escherichia coli O127:H6 (strain E2348/69 / EPEC).